Consider the following 367-residue polypeptide: MSRQSFSLLKNLRSIASGSKIQTRSVTYMPRPGDGKPRPVTLIPGDGVGPLVTNAVQQVMEAMHAPVYFEPFEVHGDMKSLPEGLLESIKKNKVCLKGGLKTPVGGGVSSLNVNLRKELDLFASLVNCFNLPGLASRHENVDIVVIRENTEGEYAGLEHEVVPGVVESLKVITKFCSERIAKYAFEYAYLNNRKKVTAVHKANIMKLADGLFLESCQEVAKKYPSIAYNEIIVDNCCMQLVARPEQFDVMVTPNLYGNLVANTAAGIAGGTGVMPGGNVGAEYAVFEQGASAGNVGKDTTEEQKNANPVALLLSSAMMLRHLQFPSFADRLETAVKRVIAEGNCRTEDLGGNSTTQEVVDAVIANLD.

The transit peptide at 1 to 25 directs the protein to the mitochondrion; that stretch reads MSRQSFSLLKNLRSIASGSKIQTRS.

It belongs to the isocitrate and isopropylmalate dehydrogenases family. Heterooligomer of catalytic and regulatory subunits. Ubiquitous. Predominantly expressed in roots, stems and leaves.

Its subcellular location is the mitochondrion. Performs an essential role in the oxidative function of the citric acid cycle. This is Isocitrate dehydrogenase [NAD] regulatory subunit 2, mitochondrial (IDH2) from Arabidopsis thaliana (Mouse-ear cress).